A 3503-amino-acid chain; its full sequence is MLRSSLLILLAIVLLGSSQAASHDQERERKLEVFEGVAVDYQIGYIGDFGGIDSGPPYIIVAEAGVETDLAIDRATGEIRTKVKLDRETRASYSLVAIPLSGRNIRVLVTVKDENDNAPTFPQTSMHIEFPENTPREVKRTLLPARDLDLEPYNTQRYNIVSGNVNDAFRLSSHRERDGVLYLDLQISGFLDRETTPGYSLLIEALDGGTPPLRGFMTVNITIQDVNDNQPIFNQSRYFATVPENATVGTSVLQVYASDTDADENGLVEYAINRRQSDKEQMFRIDPRTGAIYINKALDFETKELHELVVVAKDHGEQPLETTAFVSIRVTDVNDNQPTINVIFLSDDASPKISESAQPGEFVARISVHDPDSKTEYANVNVTLNGGDGHFALTTRDNSIYLVIVHLPLDREIVSNYTLSVVATDKGTPPLHASKSIFLRITDVNDNPPEFEQDLYHANVMEVADPGTSVLQVLAHDRDEGLNSALTYSLAETPETHAQWFQIDPQTGLITTRSHIDCETEPVPQLTVVARDGGVPPLSSTATVLVTIHDVNDNEPIFDQSFYNVSVAENEPVGRCILKVSASDPDCGVNAMVNYTIGEGFKHLTEFEVRSASGEICIAGELDFERRSSYEFPVLATDRGGLSTTAMIKMQLTDVNDNRPVFYPREYKVSLRESPKASSQASSTPIVAVVATDPDYGNFGQVSYRIVAGNEAGIFRIDRSTGEIFVVRPDMLSVRTQPMHMLNISATDGGNLRSNADAVVFLSIIDAMQRPPIFEKARYNYYVKEDIPRGTVVGSVIAASGDVAHRSPVRYSIYSGDPDGYFSIETNSGNIRIAKPLDHEAKSQVLLNIQATLGEPPVYGHTQVNIEVEDVNDNAPEFEASMVRISVPESAELGAPLYAAHAHDKDSGSSGQVTYSLVKESGKGLFAIDARSGHLILSQHLDYESSQRHTLIVTATDGGVPSLSTNLTILVDVQDVNDNPPVFEKDEYSVNVSESRSINAQIIQVNASDLDTGNNARITYRIVDAGVDNVTNSISSSDVSQHFGIFPNSGWIYLRAPLDRETRDRYQLTVLATDNGTPAAHAKTRVIVRVLDANDNDPKFQKSKYEFRIEENLRRGSVVGVVTASDLDLGENAAIRYSLLPINSSFQVHPVTGEISTREPLDRELRELYDLVVEARDQGTPVRSARVPVRIHVSDVNDNAPEIADPQEDVVSVREEQPPGTEVVRVRAVDRDHGQNASITYSIVKGRDSDGHGLFSIDPTSGVIRTRVVLDHEERSIYRLGVAASDGGNPPRETVRMLRVEVLDLNDNRPTFTSSSLVFRVREDAALGHVVGSISPIERPADVVRNSVEESFEDLRVTYTLNPLTKDLIEAAFDIDRHSGNLVVARLLDREVQSEFRLEIRALDTTASNNPQSSAITVKIEVADVNDNAPEWPQDPIDLQVSEATPVGTIIHNFTATDADTGTNGDLQYRLIRYFPQLNESQEQAMSLFRMDSLTGALSLQAPLDFEAVQEYLLIVQALDQSSNVTERLQTSVTVRLRILDANDHAPHFVSPNSSGGKTASLFISDATRIGEVVAHIVAVDEDSGDNGQLTYEITGGNGEGRFRINSQTGIIELVKSLPPATEDVEKGGRFNLIIGAKDHGQPEPKKSSLNLHLIVQGSHNNPPRFLQAVYRATILENVPSGSFVLQVTAKSLHGAENANLSYEIPAGVANDLFHVDWQRGIITTRGQFDRESQASYVLPVYVRDANRQSTLSSSAVRKQRSSDSIGDTSNGQHFDVATIYITVGDVNDNSPEFRPGSCYGLSVPENSEPGVIHTVVASDLDEGPNADLIYSITGGNLGNKFSIDSSSGELSARPLDREQHSRYTLQIQASDRGQPKSRQGHCNITIFVEDQNDNAPRFKLSKYTGSVQEDAPLGTSVVQISAVDADLGVNARLVYSLANETQWQFAIDGQSGLITTVGKLDRELQASYNFMVLATDGGRYEVRSATVPVQINVLDINDNRPIFERYPYIGQVPALIQPGQTLLKVQALDADLGANAEIVYSLNAENSAVSAKFRINPSTGALSASQSLASESGKLLHLEVVARDKGNPPQSSLGLIELLIGEAPQGTPVLRFQNETYRVMLKENSPSGTRLLQVVALRSDGRRQKVQFSFGAGNEDGILSLDSLSGEIRVNKPHLLDYDRFSTPSMSALSRGRALHYEEEIDESSEEDPNNSTRSQRALTSSSFALTNSQPNEIRVVLVARTADAPFLASYAELVIELEDENDNSPKFSQKQFVATVSEGNNKGTFVAQVHAFDSDAGSNARLRYHIVDGNHDNAFVIEPAFSGIVRTNIVLDREIRDIYKLKIIATDEGVPQMTGTATIRVQIVDVNDNQPTFPPNNLVTVSEATELGAVITSISANDVDTYPALTYRLGAESTVDIENMSIFALDRYSGKLVLKRRLDYELQQEYELDVIASDAAHEARTVLTVRVNDENDNAPVFLAQQPPAYFAILPAISEISESLSVDFDLLTVNATDADSEGNNSKVIYIIEPAQEGFSVHPSNGVVSVNMSRLQPAVSSSGDYFVRIIAKDAGKPALKSSTLLRVQANDNGSGRSQFLQNQYRAQISEAAPLGSVVLQLGQDALDQSLAIIAGNEESAFELLQSKAIVLVKPLDRERNDLYKLRLVLSHPHGPPLISSLNSSSGISVIITILDANDNFPIFDRSAKYEAEISELAPLRYSIAQLQAIDADQENTPNSEVVYDITSGNDEHMFTIDLVTGVLFVNNRLDYDSGAKSYELIIRACDSHHQRPLCSLQPFRLELHDENDNEPKFPLTEYVHFLAENEPVGSSVFRAHASDLDKGPFGQLNYSIGPAPSDESSWKMFRVDSESGLVTSAFVFDYEQRQRYDMELLASDMGGKKASVAVRVEIESRDEFTPQFTERTYRFVLPAAVALPQGYVVGQVTATDSDSGPDGRVVYQLSAPHSHFKVNRSSGAVLIKRKLKLDGDGDGNLYMDGRDISLVISASSGRHNSLSSMAVVEIALDPLAHPGTNLASAGGSSSGSIGDWAIGLLVAFLLVLCAAAGIFLFIHMRSRKPRNAVKPHLATDNAGVGNTNSYVDPSAFDTIPIRGSISGGAAGAASGQFAPPKYDEIPPFGAHAGSSGAATTSELSGSEQSGSSGRGSAEDDGEDEEIRMINEGPLHHRNGGAGAGSDDGRISDISVQNTQEYLARLGIVDHDPSGAGGGASSMAGSSHPMHLYHDDDATARSDITNLIYAKLNDVTGAGSEIGSSADDAGTTAGSIGTIGTAITHGHGVMSSYGEVPVPVPVVVGGSNVGGSLSSIVHSEEELTGSYNWDYLLDWGPQYQPLAHVFSEIARLKDDTLSEHSGSGASSSAKSKHSSSHSSAGAGSVVLKPPPSAPPTHIPPPLLTNVAPRAINLPMRLPPHLSLAPAHLPRSPIGHEASGSFSTSSAMSPSFSPSLSPLATRSPSISPLGAGPPTHLPHVSLPRHGHAPQPSQRGNVGTRM.

The signal sequence occupies residues 1 to 20 (MLRSSLLILLAIVLLGSSQA). The Extracellular segment spans residues 21-3045 (ASHDQERERK…SSSGSIGDWA (3025 aa)). 14 Cadherin domains span residues 22–121 (SHDQ…APTF), 122–233 (PQTS…QPIF), 234–340 (NQSR…QPTI), 345–451 (LSDD…PPEF), 452–558 (EQDL…EPIF), 559–662 (DQSF…RPVF), 663–774 (YPRE…PPIF), 775–878 (EKAR…APEF), 879–983 (EASM…PPVF), 984–1100 (EKDE…DPKF), 1101–1203 (QKSK…APEI), 1205–1312 (DPQE…RPTF), 1313–1432 (TSSS…APEW), and 1433–1549 (PQDP…APHF). 2 N-linked (GlcNAc...) asparagine glycosylation sites follow: asparagine 220 and asparagine 234. Phosphoserine is present on serine 236. 3 N-linked (GlcNAc...) asparagine glycosylation sites follow: asparagine 245, asparagine 381, and asparagine 416. Residues asparagine 564, asparagine 594, and asparagine 743 are each glycosylated (N-linked (GlcNAc...) asparagine). N-linked (GlcNAc...) asparagine glycans are attached at residues asparagine 966, asparagine 991, asparagine 1006, asparagine 1029, asparagine 1143, and asparagine 1236. Asparagine 1453, asparagine 1479, asparagine 1524, and asparagine 1553 each carry an N-linked (GlcNAc...) asparagine glycan. 13 consecutive Cadherin domains span residues 1556–1666 (GGKT…PPRF), 1667–1794 (LQAV…SPEF), 1796–1899 (PGSC…APRF), 1900–2004 (KLSK…RPIF), 2005–2111 (ERYP…TPVL), 2114–2269 (QNET…SPKF), 2270–2375 (SQKQ…QPTF), 2375–2479 (FPPN…APVF), 2489–2595 (AILP…RSQF), 2596–2699 (LQNQ…FPIF), 2701–2809 (RSAK…EPKF), 2810–2916 (PLTE…TPQF), and 2919–3028 (RTYR…HPGT). Residues asparagine 1700, asparagine 1884, and asparagine 1940 are each glycosylated (N-linked (GlcNAc...) asparagine). An N-linked (GlcNAc...) asparagine glycan is attached at asparagine 2115. Residues 2193–2225 (GRALHYEEEIDESSEEDPNNSTRSQRALTSSSF) form a disordered region. Positions 2200–2210 (EEIDESSEEDP) are enriched in acidic residues. N-linked (GlcNAc...) asparagine glycans are attached at residues asparagine 2211 and asparagine 2212. Over residues 2211-2225 (NNSTRSQRALTSSSF) the composition is skewed to polar residues. 6 N-linked (GlcNAc...) asparagine glycosylation sites follow: asparagine 2421, asparagine 2511, asparagine 2520, asparagine 2547, asparagine 2588, and asparagine 2678. N-linked (GlcNAc...) asparagine glycosylation is found at asparagine 2845 and asparagine 2967. The helical transmembrane segment at 3046–3066 (IGLLVAFLLVLCAAAGIFLFI) threads the bilayer. Over 3067–3503 (HMRSRKPRNA…SQRGNVGTRM (437 aa)) the chain is Cytoplasmic. Disordered regions lie at residues 3114 to 3195 (AGAA…GRIS), 3360 to 3404 (LSEH…IPPP), and 3431 to 3503 (LPRS…GTRM). 2 stretches are compositionally biased toward low complexity: residues 3133 to 3159 (GAHA…SGRG) and 3363 to 3372 (HSGSGASSSA). The segment covering 3391-3404 (KPPPSAPPTHIPPP) has biased composition (pro residues). The span at 3440-3463 (ASGSFSTSSAMSPSFSPSLSPLAT) shows a compositional bias: low complexity. A phosphoserine mark is found at serine 3465 and serine 3469. Positions 3492 to 3503 (QPSQRGNVGTRM) are enriched in polar residues.

As to quaternary structure, interacts (via cytoplasmic region) with Myo31DF. In terms of processing, phosphorylated by fj on Ser/Thr of cadherin domains. In terms of tissue distribution, expressed in embryonic ectoderm. In larvae, expression is restricted to imaginal disks and brain.

It localises to the cell membrane. Its subcellular location is the cell junction. Required for normal morphogenesis of adult structures derived from imaginal disks. Plays a role in planar cell polarity and in determining body left-right asymmetry. Expression in segment H1 of the imaginal ring and interaction with Myo31DF are required to induce changes of cell shape and orientation in segment H2, which then gives rise to normal, dextral looping of the adult hindgut. This is Protein dachsous (ds) from Drosophila melanogaster (Fruit fly).